The following is a 132-amino-acid chain: Transcription antitermination protein NusB (132 aa).

Belongs to the NusB family.

In terms of biological role, involved in transcription antitermination. Required for transcription of ribosomal RNA (rRNA) genes. Binds specifically to the boxA antiterminator sequence of the ribosomal RNA (rrn) operons. This is Transcription antitermination protein NusB from Campylobacter jejuni subsp. jejuni serotype O:6 (strain 81116 / NCTC 11828).